Here is a 383-residue protein sequence, read N- to C-terminus: tRNA-specific 2-thiouridylase MnmA (383 aa).

Residues 29 to 36 (GMSGGVDS) and Met-55 contribute to the ATP site. The interaction with target base in tRNA stretch occupies residues 115–117 (NPD). The Nucleophile role is filled by Cys-120. Cysteines 120 and 217 form a disulfide. An ATP-binding site is contributed by Gly-145. The segment at 167–169 (KDQ) is interaction with tRNA. Catalysis depends on Cys-217, which acts as the Cysteine persulfide intermediate. The segment at 329-330 (RY) is interaction with tRNA.

It belongs to the MnmA/TRMU family.

Its subcellular location is the cytoplasm. The enzyme catalyses S-sulfanyl-L-cysteinyl-[protein] + uridine(34) in tRNA + AH2 + ATP = 2-thiouridine(34) in tRNA + L-cysteinyl-[protein] + A + AMP + diphosphate + H(+). Its function is as follows. Catalyzes the 2-thiolation of uridine at the wobble position (U34) of tRNA, leading to the formation of s(2)U34. This chain is tRNA-specific 2-thiouridylase MnmA, found in Histophilus somni (strain 2336) (Haemophilus somnus).